The sequence spans 239 residues: Interleukin-27 subunit alpha (239 aa).

The N-terminal stretch at 1–28 is a signal peptide; that stretch reads MGQMADDLGWRLSLLLLSLLLARAGVWG. A glycan (N-linked (GlcNAc...) asparagine) is linked at asparagine 89. A disordered region spans residues 167–186; the sequence is EEENEAGRELLPGAPGGPSK.

It belongs to the IL-6 superfamily. Heterodimer with EBI3; not disulfide-linked. This heterodimer is known as interleukin IL-27. Post-translationally, O-glycosylated.

The protein resides in the secreted. Associates with EBI3 to form the IL-27 interleukin, a heterodimeric cytokine which functions in innate immunity. Cytokine with pro- and anti-inflammatory properties, that can regulate T-helper cell development, suppress T-cell proliferation, stimulate cytotoxic T-cell activity, induce isotype switching in B-cells, and that has diverse effects on innate immune cells. Among its target cells are CD4 T-helper cells which can differentiate in type 1 effector cells (TH1), type 2 effector cells (TH2) and IL17 producing helper T-cells (TH17). It drives rapid clonal expansion of naive but not memory CD4 T-cells. It also strongly synergizes with IL-12 to trigger interferon-gamma/IFN-gamma production of naive CD4 T-cells, binds to the cytokine receptor WSX-1/TCCR which appears to be required but not sufficient for IL-27-mediated signal transduction. IL-27 potentiate the early phase of TH1 response and suppress TH2 and TH17 differentiation. It induces the differentiation of TH1 cells via two distinct pathways, p38 MAPK/TBX21- and ICAM1/ITGAL/ERK-dependent pathways. It also induces STAT1, STAT3, STAT4 and STAT5 phosphorylation and activates TBX21/T-Bet via STAT1 with resulting IL12RB2 up-regulation, an event crucial to TH1 cell commitment. It suppresses the expression of GATA3, the inhibitor TH1 cells development. In CD8 T-cells, it activates STATs as well as GZMB. IL-27 reveals to be a potent inhibitor of TH17 cell development and of IL-17 production. Indeed IL27 alone is also able to inhibit the production of IL17 by CD4 and CD8 T-cells. While IL-27 suppressed the development of pro-inflammatory Th17 cells via STAT1, it inhibits the development of anti-inflammatory inducible regulatory T-cells, iTreg, independently of STAT1. IL-27 also has an effect on cytokine production, it suppresses pro-inflammatory cytokine production such as IL2, IL4, IL5 and IL6 and activates suppressors of cytokine signaling such as SOCS1 and SOCS3. Apart from suppression of cytokine production, IL-27 also antagonizes the effects of some cytokines such as IL6 through direct effects on T-cells. Another important role of IL-27 is its antitumor activity as well as its antiangiogenic activity with activation of production of antiangiogenic chemokines such as IP-10/CXCL10 and MIG/CXCL9. In vein endothelial cells, it induces IRF1/interferon regulatory factor 1 and increase the expression of MHC class II transactivator/CIITA with resulting up-regulation of major histocompatibility complex class II. The protein is Interleukin-27 subunit alpha (IL27) of Sus scrofa (Pig).